The primary structure comprises 229 residues: 2,3-bisphosphoglycerate-dependent phosphoglycerate mutase (229 aa).

Substrate-binding positions include Arg-8–Asn-15, Thr-21–Gly-22, Arg-60, Glu-87–Tyr-90, Lys-98, Arg-114–Arg-115, and Gly-183–Asn-184. The active-site Tele-phosphohistidine intermediate is the His-9. The active-site Proton donor/acceptor is Glu-87.

It belongs to the phosphoglycerate mutase family. BPG-dependent PGAM subfamily. As to quaternary structure, homodimer.

The enzyme catalyses (2R)-2-phosphoglycerate = (2R)-3-phosphoglycerate. It functions in the pathway carbohydrate degradation; glycolysis; pyruvate from D-glyceraldehyde 3-phosphate: step 3/5. Functionally, catalyzes the interconversion of 2-phosphoglycerate and 3-phosphoglycerate. In Polynucleobacter necessarius subsp. necessarius (strain STIR1), this protein is 2,3-bisphosphoglycerate-dependent phosphoglycerate mutase.